The sequence spans 132 residues: MIKALNTVWQYLRAFILIYACLYAGIFIASLLPITIPGSIIGMLIMFLLLALQILPAKWVNPGCFVLIRYMALLFVPIGVGVMQYYDVLKAQFGPIVVSCAISTLVVFLVVSWSSHLVHGERKVVGQKGNQK.

The next 4 membrane-spanning stretches (helical) occupy residues 8–28 (VWQYLRAFILIYACLYAGIFI), 31–51 (LLPITIPGSIIGMLIMFLLLA), 63–83 (GCFVLIRYMALLFVPIGVGVM), and 93–113 (FGPIVVSCAISTLVVFLVVSW).

The protein belongs to the UPF0299 family.

It is found in the cell inner membrane. In Enterobacter sp. (strain 638), this protein is UPF0299 membrane protein Ent638_2744.